Consider the following 751-residue polypeptide: Semaphorin-3C (751 aa).

The signal sequence occupies residues 1–20 (MAFRTICVLVGVFICSICVK). The 484-residue stretch at 28 to 511 (RVYLTFDELR…SNEGVSQVSL (484 aa)) folds into the Sema domain. N-linked (GlcNAc...) asparagine glycosylation is present at Asn-81. Cys-101 and Cys-112 are joined by a disulfide. Asn-123 is a glycosylation site (N-linked (GlcNAc...) asparagine). Cys-130 and Cys-139 are oxidised to a cystine. N-linked (GlcNAc...) asparagine glycans are attached at residues Asn-252 and Asn-268. 2 disulfides stabilise this stretch: Cys-266–Cys-378 and Cys-290–Cys-338. Residue Asn-465 is glycosylated (N-linked (GlcNAc...) asparagine). Cysteines 514 and 532 form a disulfide. In terms of domain architecture, Ig-like C2-type spans 571-655 (AYRNAAEIVQ…TENSFKQTIA (85 aa)). 2 N-linked (GlcNAc...) asparagine glycosylation sites follow: Asn-585 and Asn-586. The cysteines at positions 643 and 709 are disulfide-linked. Basic and acidic residues predominate over residues 712 to 731 (TRQQHQQGDESQKMRGDYGK). The segment at 712-751 (TRQQHQQGDESQKMRGDYGKLKALINSRKSRNRRNQLPES) is disordered.

Belongs to the semaphorin family. As to quaternary structure, interacts with PLXND1. In terms of tissue distribution, expressed intensely in the heart, skeletal muscle, colon, small intestine, ovary, testis, and prostate. Faint expression ubiquitously among other organs, including brain.

It localises to the secreted. Binds to plexin family members and plays an important role in the regulation of developmental processes. Required for normal cardiovascular development during embryogenesis. Functions as attractant for growing axons, and thereby plays an important role in axon growth and axon guidance. The polypeptide is Semaphorin-3C (SEMA3C) (Homo sapiens (Human)).